We begin with the raw amino-acid sequence, 154 residues long: Ecotin-like protein 2 (154 aa).

Belongs to the protease inhibitor I11 (ecotin) family.

The polypeptide is Ecotin-like protein 2 (Leishmania braziliensis).